We begin with the raw amino-acid sequence, 431 residues long: MIERVKGTRDFLPEDMAKRRWVFEKIREVFEAYGFKEILTPVMEYTKLFQLRSGEEVVKQLYAFKDKGGRDVSLRPDMTSSVARLYVNSFQMAPKPIKWYYIANMFRYEEPQSGRYREFWQAGVELIGSDKVEADAEVIALFVESYLSTGLRDFTVNIGDRILLDEFAGMLGVSDDIGLMRIIDKRDKLSQEEFINLLKEFGLGESEIEKVLELVEIKGRPDNVLPLAEELFKSKKAKEEISKLYKLTDLLEWYGVKDWIRIDLGIARGFDYYTSIVFEAISPNELGIGSIGGGGRYDNLIEIFGGKPTPATGFAIGIERLLPILEWKGLIPKPQTGPEVFVIPLKDMEKVAINIAVKLRREKIKTDIELSGRKLGKALDYANRVGAKLVIIVGKRDVERGVVTIRDMESGEQYNVSLNEIVDKVKNLLKR.

This sequence belongs to the class-II aminoacyl-tRNA synthetase family.

It localises to the cytoplasm. It catalyses the reaction tRNA(His) + L-histidine + ATP = L-histidyl-tRNA(His) + AMP + diphosphate + H(+). The polypeptide is Histidine--tRNA ligase (hisS) (Pyrococcus horikoshii (strain ATCC 700860 / DSM 12428 / JCM 9974 / NBRC 100139 / OT-3)).